The sequence spans 114 residues: MHELGITQNIIAIVAEQAKGIPVKRVTLEIGQLSAIMADSIRFCFDICCQGTVLEGATLEIIEILGRGKCRDCGQEIALFQPFGTCDRCGSIQLEIIQGQELKIKEMEIEEICV.

Histidine 2 lines the Ni(2+) pocket. Residues cysteine 70, cysteine 73, cysteine 86, and cysteine 89 each contribute to the Zn(2+) site.

It belongs to the HypA/HybF family.

In terms of biological role, involved in the maturation of [NiFe] hydrogenases. Required for nickel insertion into the metal center of the hydrogenase. This Rippkaea orientalis (strain PCC 8801 / RF-1) (Cyanothece sp. (strain PCC 8801)) protein is Hydrogenase maturation factor HypA.